The sequence spans 491 residues: Trigger factor (491 aa).

The PPIase FKBP-type domain occupies 173 to 260; the sequence is GDVAVVSFSG…LDELKGRELP (88 aa). The tract at residues 435–491 is disordered; sequence MVDPASEDKPAKASKAKSSKAKAEKEPAAEGQAKAKPAAKTSKSKTKAAEKLITPID. Over residues 463 to 475 the composition is skewed to low complexity; that stretch reads AEGQAKAKPAAKT.

This sequence belongs to the FKBP-type PPIase family. Tig subfamily.

Its subcellular location is the cytoplasm. The catalysed reaction is [protein]-peptidylproline (omega=180) = [protein]-peptidylproline (omega=0). Functionally, involved in protein export. Acts as a chaperone by maintaining the newly synthesized protein in an open conformation. Functions as a peptidyl-prolyl cis-trans isomerase. The polypeptide is Trigger factor (Synechococcus sp. (strain RCC307)).